Here is a 288-residue protein sequence, read N- to C-terminus: Acetyl-coenzyme A carboxylase carboxyl transferase subunit beta (288 aa).

The CoA carboxyltransferase N-terminal domain maps to 33–288 (LFSQCPGCKH…LVRLHGGSPR (256 aa)). Cysteine 37, cysteine 40, cysteine 55, and cysteine 58 together coordinate Zn(2+). The C4-type zinc-finger motif lies at 37-58 (CPGCKHTIYQKDLGSERICPHC).

This sequence belongs to the AccD/PCCB family. In terms of assembly, acetyl-CoA carboxylase is a heterohexamer composed of biotin carboxyl carrier protein (AccB), biotin carboxylase (AccC) and two subunits each of ACCase subunit alpha (AccA) and ACCase subunit beta (AccD). Zn(2+) is required as a cofactor.

Its subcellular location is the cytoplasm. It carries out the reaction N(6)-carboxybiotinyl-L-lysyl-[protein] + acetyl-CoA = N(6)-biotinyl-L-lysyl-[protein] + malonyl-CoA. The protein operates within lipid metabolism; malonyl-CoA biosynthesis; malonyl-CoA from acetyl-CoA: step 1/1. Its function is as follows. Component of the acetyl coenzyme A carboxylase (ACC) complex. Biotin carboxylase (BC) catalyzes the carboxylation of biotin on its carrier protein (BCCP) and then the CO(2) group is transferred by the transcarboxylase to acetyl-CoA to form malonyl-CoA. The chain is Acetyl-coenzyme A carboxylase carboxyl transferase subunit beta from Streptococcus pneumoniae serotype 4 (strain ATCC BAA-334 / TIGR4).